Reading from the N-terminus, the 23-residue chain is Pseudin-4 (23 aa).

Expressed by the skin glands.

The protein resides in the secreted. Its function is as follows. Possesses antifungal activity against C.albicans and is also active against E.coli and S.aureus. The sequence is that of Pseudin-4 from Pseudis paradoxa (Paradoxical frog).